We begin with the raw amino-acid sequence, 203 residues long: Glycerol-3-phosphate acyltransferase (203 aa).

Transmembrane regions (helical) follow at residues 3–23, 61–81, 87–107, 118–138, 144–164, and 172–192; these read NLIL…LILA, ILTV…ASFL, VLWT…FLGF, GVLA…WFLV, ISSL…FIIH, and THAP…PNIV.

Belongs to the PlsY family. In terms of assembly, probably interacts with PlsX.

It is found in the cell inner membrane. The enzyme catalyses an acyl phosphate + sn-glycerol 3-phosphate = a 1-acyl-sn-glycero-3-phosphate + phosphate. The protein operates within lipid metabolism; phospholipid metabolism. Functionally, catalyzes the transfer of an acyl group from acyl-phosphate (acyl-PO(4)) to glycerol-3-phosphate (G3P) to form lysophosphatidic acid (LPA). This enzyme utilizes acyl-phosphate as fatty acyl donor, but not acyl-CoA or acyl-ACP. The polypeptide is Glycerol-3-phosphate acyltransferase (Campylobacter concisus (strain 13826)).